A 338-amino-acid chain; its full sequence is Large ribosomal subunit protein uL10 (338 aa).

Positions 309–327 are enriched in basic and acidic residues; that stretch reads KAEVEEAKEEEKEEKKEEA. Residues 309–338 form a disordered region; that stretch reads KAEVEEAKEEEKEEKKEEAAPAAAGLGLLF.

The protein belongs to the universal ribosomal protein uL10 family. In terms of assembly, part of the 50S ribosomal subunit. Forms part of the ribosomal stalk which helps the ribosome interact with GTP-bound translation factors. Forms a heptameric L10(L12)2(L12)2(L12)2 complex, where L10 forms an elongated spine to which the L12 dimers bind in a sequential fashion.

Functionally, forms part of the ribosomal stalk, playing a central role in the interaction of the ribosome with GTP-bound translation factors. The protein is Large ribosomal subunit protein uL10 of Methanothermococcus thermolithotrophicus (Methanococcus thermolithotrophicus).